The sequence spans 404 residues: Cysteine desulfurase IscS (404 aa).

Residues 75–76 (AT), N155, Q183, and 203–205 (SGH) contribute to the pyridoxal 5'-phosphate site. N6-(pyridoxal phosphate)lysine is present on K206. Residue T243 coordinates pyridoxal 5'-phosphate. The active-site Cysteine persulfide intermediate is C328. C328 provides a ligand contact to [2Fe-2S] cluster.

The protein belongs to the class-V pyridoxal-phosphate-dependent aminotransferase family. NifS/IscS subfamily. Homodimer. Forms a heterotetramer with IscU, interacts with other sulfur acceptors. Pyridoxal 5'-phosphate is required as a cofactor.

The protein localises to the cytoplasm. It carries out the reaction (sulfur carrier)-H + L-cysteine = (sulfur carrier)-SH + L-alanine. It functions in the pathway cofactor biosynthesis; iron-sulfur cluster biosynthesis. In terms of biological role, master enzyme that delivers sulfur to a number of partners involved in Fe-S cluster assembly, tRNA modification or cofactor biosynthesis. Catalyzes the removal of elemental sulfur atoms from cysteine to produce alanine. Functions as a sulfur delivery protein for Fe-S cluster synthesis onto IscU, an Fe-S scaffold assembly protein, as well as other S acceptor proteins. This Shewanella denitrificans (strain OS217 / ATCC BAA-1090 / DSM 15013) protein is Cysteine desulfurase IscS.